A 155-amino-acid chain; its full sequence is Protein E6 (155 aa).

2 zinc fingers span residues 33–69 and 106–142; these read CVYC…CRVC and CYRC…CLQC.

The protein belongs to the papillomaviridae E6 protein family. In terms of assembly, forms homodimers. Interacts with ubiquitin-protein ligase UBE3A/E6-AP; this interaction stimulates UBE3A ubiquitin activity. Interacts with host TP53 and EP300; this interaction inhibits TP53 activity.

The protein localises to the host cytoplasm. Its subcellular location is the host nucleus. Its function is as follows. Plays a major role in the induction and maintenance of cellular transformation. E6 associates with host UBE3A/E6-AP ubiquitin-protein ligase and modulates its activity. Sequesters tumor suppressor TP53 in the host cytoplasm and modulates its activity by interacting with host EP300 that results in the reduction of TP53 acetylation and activation. In turn, apoptosis induced by DNA damage is inhibited. E6 also protects host keratinocytes from apoptosis by mediating the degradation of host BAK1. May also inhibit host immune response. This Homo sapiens (Human) protein is Protein E6.